The sequence spans 660 residues: Alpha-1,2-mannosyltransferase MNN21 (660 aa).

At Met-1–Lys-17 the chain is on the cytoplasmic side. Residues Tyr-18–Trp-38 traverse the membrane as a helical segment. At Ser-39–Asp-660 the chain is on the extracellular side. Residues Pro-75–Leu-125 form a disordered region. N-linked (GlcNAc...) asparagine glycosylation is present at Asn-657.

This sequence belongs to the MNN1/MNT family.

The protein localises to the golgi apparatus membrane. Its pathway is protein modification; protein glycosylation. Functionally, alpha-1,2-mannosyltransferase required for cell wall integrity. Responsible for addition of the first alpha-1,2-linked mannose to form the branches on the mannan backbone of oligosaccharides. Addition of alpha-1,2-mannose is required for stabilization of the alpha-1,6-mannose backbone and hence regulates mannan fibril length; and is important for both immune recognition and virulence. The chain is Alpha-1,2-mannosyltransferase MNN21 (MNN21) from Candida albicans (strain SC5314 / ATCC MYA-2876) (Yeast).